We begin with the raw amino-acid sequence, 194 residues long: Holliday junction branch migration complex subunit RuvA (194 aa).

A domain I region spans residues 1–64 (MISRLTGKLV…EDAHLLFGFA (64 aa)). Positions 65-143 (TAEERKTFRQ…AHAVTDGLFA (79 aa)) are domain II. Residues 144–147 (AAPA) are flexible linker. The domain III stretch occupies residues 147–194 (AADETEDIVGTLLALGYSEREAKAAVKGVPEGTDVGEGVRLALKNLLK).

The protein belongs to the RuvA family. In terms of assembly, homotetramer. Forms an RuvA(8)-RuvB(12)-Holliday junction (HJ) complex. HJ DNA is sandwiched between 2 RuvA tetramers; dsDNA enters through RuvA and exits via RuvB. An RuvB hexamer assembles on each DNA strand where it exits the tetramer. Each RuvB hexamer is contacted by two RuvA subunits (via domain III) on 2 adjacent RuvB subunits; this complex drives branch migration. In the full resolvosome a probable DNA-RuvA(4)-RuvB(12)-RuvC(2) complex forms which resolves the HJ.

The protein resides in the cytoplasm. In terms of biological role, the RuvA-RuvB-RuvC complex processes Holliday junction (HJ) DNA during genetic recombination and DNA repair, while the RuvA-RuvB complex plays an important role in the rescue of blocked DNA replication forks via replication fork reversal (RFR). RuvA specifically binds to HJ cruciform DNA, conferring on it an open structure. The RuvB hexamer acts as an ATP-dependent pump, pulling dsDNA into and through the RuvAB complex. HJ branch migration allows RuvC to scan DNA until it finds its consensus sequence, where it cleaves and resolves the cruciform DNA. This Neisseria meningitidis serogroup A / serotype 4A (strain DSM 15465 / Z2491) protein is Holliday junction branch migration complex subunit RuvA.